We begin with the raw amino-acid sequence, 394 residues long: Elongation factor Tu (394 aa).

Residues 10-204 (KPHVNVGTIG…ALDSYIPEPE (195 aa)) enclose the tr-type G domain. The G1 stretch occupies residues 19–26 (GHVDHGKT). A GTP-binding site is contributed by 19–26 (GHVDHGKT). Position 26 (T26) interacts with Mg(2+). The G2 stretch occupies residues 60-64 (GITIN). Residues 81-84 (DCPG) form a G3 region. Residues 81–85 (DCPGH) and 136–139 (NKCD) contribute to the GTP site. A G4 region spans residues 136-139 (NKCD). The G5 stretch occupies residues 174-176 (SAL).

It belongs to the TRAFAC class translation factor GTPase superfamily. Classic translation factor GTPase family. EF-Tu/EF-1A subfamily. In terms of assembly, monomer.

The protein localises to the cytoplasm. It catalyses the reaction GTP + H2O = GDP + phosphate + H(+). In terms of biological role, GTP hydrolase that promotes the GTP-dependent binding of aminoacyl-tRNA to the A-site of ribosomes during protein biosynthesis. The polypeptide is Elongation factor Tu (Shewanella amazonensis (strain ATCC BAA-1098 / SB2B)).